Reading from the N-terminus, the 2569-residue chain is Highly reducing polyketide synthase pks5 (2569 aa).

The interval 1 to 25 (MVVKFANGVRNRGNGDEGQRGTQRP) is disordered. The region spanning 27 to 452 (STPIAIVGMS…GTNVHVIMEA (426 aa)) is the Ketosynthase family 3 (KS3) domain. Catalysis depends on for beta-ketoacyl synthase activity residues cysteine 200, histidine 335, and histidine 375. A malonyl-CoA:ACP transacylase (MAT) domain region spans residues 572-892 (IFNGQGAQWY…PYLSCLRRNI (321 aa)). The N-terminal hotdog fold stretch occupies residues 960 to 1097 (HELLGSSVPG…GYVSAEDSSK (138 aa)). The tract at residues 960 to 1268 (HELLGSSVPG…LRLQKIQAED (309 aa)) is dehydratase (DH) domain. In terms of domain architecture, PKS/mFAS DH spans 960-1270 (HELLGSSVPG…LQKIQAEDDN (311 aa)). Catalysis depends on histidine 992, which acts as the Proton acceptor; for dehydratase activity. The tract at residues 1117–1270 (RVRHVRPDAM…LQKIQAEDDN (154 aa)) is C-terminal hotdog fold. The Proton donor; for dehydratase activity role is filled by aspartate 1179. Residues 1457 to 1567 (LEVGAGTGGA…RKLLKPKGKL (111 aa)) form a methyltransferase (CMet) domain region. Residues 1855–2170 (DLLNKIEFLE…SGTHMGKIVL (316 aa)) are enoyl reductase (ER) domain. The interval 2195–2371 (THLIVGGLRG…AISINLGPVD (177 aa)) is ketoreductase (KR) domain. The 78-residue stretch at 2485–2562 (AARKLVSELI…DFAALVASRS (78 aa)) folds into the Carrier domain. Serine 2522 is subject to O-(pantetheine 4'-phosphoryl)serine.

Highly reducing polyketide synthase; part of the gene cluster that mediates the biosynthesis of abscisic acid (ABA), a phytohormone that acts antagonistically toward salicylic acid (SA), jasmonic acid (JA) and ethylene (ETH) signaling, to impede plant defense responses. The first step of the pathway catalyzes the reaction from farnesyl diphosphate to alpha-ionylideneethane performed by the alpha-ionylideneethane synthase abl3 via a three-step reaction mechanism involving 2 neutral intermediates, beta-farnesene and allofarnesene. The cytochrome P450 monooxygenase abl1 might then be involved in the conversion of alpha-ionylideneethane to alpha-ionylideneacetic acid. Alpha-ionylideneacetic acid is further converted to abscisic acid in 2 steps involving the cytochrome P450 monooxygenase abl2 and the short-chain dehydrogenase/reductase abl4, via the intermediates 1'-deoxy-ABA or 1',4'-trans-diol-ABA, depending on the order of action of these 2 enzymes. Abl2 is responsible for the hydroxylation of carbon atom C-1' and abl4 might be involved in the oxidation of the C-4' carbon atom. Pks5 is clearly not involved in the production of ABA. Nonetheless, the possibility cannot be excluded that pks5 may modify ABA into another compound. It also cannot be excluded the possibility that pks5 also has a function completely independent of ABA synthesis. Pks5 is not required for pathogenicity on B.napus cotyledon. This chain is Highly reducing polyketide synthase pks5, found in Leptosphaeria maculans (strain JN3 / isolate v23.1.3 / race Av1-4-5-6-7-8) (Blackleg fungus).